A 487-amino-acid polypeptide reads, in one-letter code: Serine/threonine-protein kinase 4 (487 aa).

Position 1 is an N-acetylmethionine (methionine 1). Threonine 3 is subject to Phosphothreonine. The Protein kinase domain maps to 30-281 (FDVLEKLGEG…ATQLLQHPFV (252 aa)). ATP is bound by residues 36–44 (LGEGSYGSV) and lysine 59. The Proton acceptor role is filled by aspartate 149. Position 183 is a phosphothreonine; by autocatalysis (threonine 183). Phosphoserine is present on serine 265. Residues 290 to 310 (LRDLINEAMDVKLKRQESQQR) are a coiled coil. Over residues 303–312 (KRQESQQREV) the composition is skewed to basic and acidic residues. Residues 303 to 332 (KRQESQQREVDQDDEENSEEDEMDSGTMVR) form a disordered region. A compositionally biased stretch (acidic residues) spans 313 to 326 (DQDDEENSEEDEMD). A Phosphoserine modification is found at serine 320. Phosphothreonine is present on residues threonine 340 and threonine 367. Threonine 387 carries the phosphothreonine; by PKB/AKT1 modification. A phosphoserine mark is found at serine 410 and serine 414. At tyrosine 433 the chain carries Phosphotyrosine. Residues 433-480 (YEFLKSWTVEDLQKRLLALDPMMEQEIEEIRQKYQSKRQPILDAIEAK) enclose the SARAH domain.

Belongs to the protein kinase superfamily. STE Ser/Thr protein kinase family. STE20 subfamily. In terms of assembly, homodimer; mediated via the coiled-coil region. Interacts with NORE1, which inhibits autoactivation. Interacts with and stabilizes SAV1. Interacts with RASSF1. Interacts with FOXO3. Interacts with RASSF2 (via SARAH domain). Interacts with AR, PKB/AKT1, TNNI3 and SIRT1. Interacts with DLG5 (via PDZ domain 3). Interacts with MARK3 and SCRIB in the presence of DLG5. The cofactor is Mg(2+). In terms of processing, autophosphorylated on serine and threonine residues. Phosphorylation at Thr-387 by PKB/AKT1, leads to inhibition of its: kinase activity, nuclear translocation and autophosphorylation at Thr-183. It also diminishes its cleavage by caspases and its ability to phosphorylate FOXO3. Post-translationally, proteolytically cleaved by caspase-3 during apoptosis at Asp-326 and Asp-349 resulting in a 37 kDa or a 39 kDa subunit respectively. The 39 kDa subunit is further cleaved into the 37 kDa form. Proteolytic cleavage results in kinase activation and nuclear translocation of the truncated form (MST1/N). It is less likely that cleavage at Asp-349 is a prerequisite for activation as this site is not conserved in the murine ortholog.

The protein localises to the cytoplasm. The protein resides in the nucleus. It catalyses the reaction L-seryl-[protein] + ATP = O-phospho-L-seryl-[protein] + ADP + H(+). The enzyme catalyses L-threonyl-[protein] + ATP = O-phospho-L-threonyl-[protein] + ADP + H(+). Its activity is regulated as follows. Inhibited by the C-terminal non-catalytic region. Activated by caspase-cleavage. Full activation also requires homodimerization and autophosphorylation of Thr-183. Activated by RASSF1 which acts by preventing its dephosphorylation. In terms of biological role, stress-activated, pro-apoptotic kinase which, following caspase-cleavage, enters the nucleus and induces chromatin condensation followed by internucleosomal DNA fragmentation. Key component of the Hippo signaling pathway which plays a pivotal role in organ size control and tumor suppression by restricting proliferation and promoting apoptosis. The core of this pathway is composed of a kinase cascade wherein STK3/MST2 and STK4/MST1, in complex with its regulatory protein SAV1, phosphorylates and activates LATS1/2 in complex with its regulatory protein MOB1, which in turn phosphorylates and inactivates YAP1 oncoprotein and WWTR1/TAZ. Phosphorylation of YAP1 by LATS2 inhibits its translocation into the nucleus to regulate cellular genes important for cell proliferation, cell death, and cell migration. STK3/MST2 and STK4/MST1 are required to repress proliferation of mature hepatocytes, to prevent activation of facultative adult liver stem cells (oval cells), and to inhibit tumor formation. Phosphorylates 'Ser-14' of histone H2B (H2BS14ph) during apoptosis. Phosphorylates FOXO3 upon oxidative stress, which results in its nuclear translocation and cell death initiation. Phosphorylates MOBKL1A, MOBKL1B and RASSF2. Phosphorylates TNNI3 (cardiac Tn-I) and alters its binding affinity to TNNC1 (cardiac Tn-C) and TNNT2 (cardiac Tn-T). Phosphorylates FOXO1 on 'Ser-212' and regulates its activation and stimulates transcription of PMAIP1 in a FOXO1-dependent manner. Phosphorylates SIRT1 and inhibits SIRT1-mediated p53/TP53 deacetylation, thereby promoting p53/TP53 dependent transcription and apoptosis upon DNA damage. Acts as an inhibitor of PKB/AKT1. Phosphorylates AR on 'Ser-650' and suppresses its activity by intersecting with PKB/AKT1 signaling and antagonizing formation of AR-chromatin complexes. The sequence is that of Serine/threonine-protein kinase 4 (STK4) from Macaca mulatta (Rhesus macaque).